Reading from the N-terminus, the 701-residue chain is Triadin (701 aa).

The segment at 1–28 (MTEITAEGNASTTTTVIDSKNGSVPKSP) is disordered. Residues 1 to 47 (MTEITAEGNASTTTTVIDSKNGSVPKSPGKVLKRTVTEDIVTTFSSP) lie on the Cytoplasmic side of the membrane. Residues 8–24 (GNASTTTTVIDSKNGSV) show a composition bias toward polar residues. The helical transmembrane segment at 48-68 (AAWLLVIALIITWSAVAVVMF) threads the bilayer. Residues 69–701 (DLVDYKNFSA…SSPGQKQQGQ (633 aa)) lie on the Lumenal side of the membrane. Asn-75 carries N-linked (GlcNAc...) asparagine glycosylation. Residues 117 to 130 (DGDEDDDDGDEDTD) are compositionally biased toward acidic residues. Disordered stretches follow at residues 117-256 (DGDE…KHEQ), 273-654 (GDLR…TKRQ), and 676-701 (FPVTPAYRPGESSGQPSSPGQKQQGQ). Basic and acidic residues-rich tracts occupy residues 131 to 256 (KGEI…KHEQ), 303 to 351 (EGKE…KAPE), 365 to 385 (AKKDEKKEDSKKTKTPVEEHP), 391 to 426 (EKKEKYVEPAKSSKKEHSAPSEKQVKAKTERAKEET), 437 to 485 (GKKE…EVKP), and 492 to 643 (VKKE…KAKE). Asn-617 carries an N-linked (GlcNAc...) asparagine glycan. Positions 684 to 701 (PGESSGQPSSPGQKQQGQ) are enriched in low complexity.

In terms of assembly, homooligomer of variable subunit number; disulfide-linked. Interacts with CASQ1 and RYR1 in skeletal muscle. Interacts with CASQ2. Post-translationally, phosphorylated by CaMK2. In terms of processing, N-glycosylated. In terms of tissue distribution, detected in heart (at protein level). Skeletal and cardiac muscle.

The protein localises to the sarcoplasmic reticulum membrane. In terms of biological role, contributes to the regulation of lumenal Ca2+ release via the sarcoplasmic reticulum calcium release channels RYR1 and RYR2, a key step in triggering skeletal and heart muscle contraction. Required for normal organization of the triad junction, where T-tubules and the sarcoplasmic reticulum terminal cisternae are in close contact. Required for normal skeletal muscle strength. Plays a role in excitation-contraction coupling in the heart and in regulating the rate of heart beats. The sequence is that of Triadin (TRDN) from Canis lupus familiaris (Dog).